Reading from the N-terminus, the 390-residue chain is 8-amino-7-oxononanoate synthase (390 aa).

Arg-20 serves as a coordination point for substrate. 107 to 108 (GF) contacts pyridoxal 5'-phosphate. His-132 serves as a coordination point for substrate. Pyridoxal 5'-phosphate-binding positions include Ser-179, 204 to 207 (DDAH), and 235 to 238 (TLSK). Lys-238 carries the N6-(pyridoxal phosphate)lysine modification. Thr-352 serves as a coordination point for substrate.

Belongs to the class-II pyridoxal-phosphate-dependent aminotransferase family. BioF subfamily. In terms of assembly, homodimer. Pyridoxal 5'-phosphate is required as a cofactor.

It catalyses the reaction 6-carboxyhexanoyl-[ACP] + L-alanine + H(+) = (8S)-8-amino-7-oxononanoate + holo-[ACP] + CO2. It functions in the pathway cofactor biosynthesis; biotin biosynthesis. Its function is as follows. Catalyzes the decarboxylative condensation of pimeloyl-[acyl-carrier protein] and L-alanine to produce 8-amino-7-oxononanoate (AON), [acyl-carrier protein], and carbon dioxide. This is 8-amino-7-oxononanoate synthase from Exiguobacterium sibiricum (strain DSM 17290 / CCUG 55495 / CIP 109462 / JCM 13490 / 255-15).